The following is a 412-amino-acid chain: Argininosuccinate synthase (412 aa).

Residues 10–18 (AYSGGLDTS) and A36 contribute to the ATP site. L-citrulline is bound by residues Y87 and S92. The residue at position 87 (Y87) is a Phosphotyrosine. N6-acetyllysine is present on K112. Y113 is modified (phosphotyrosine). An ATP-binding site is contributed by 115–123 (SHGATGKGN). T119, N123, and D124 together coordinate L-aspartate. Residue N123 coordinates L-citrulline. R127 contributes to the L-citrulline binding site. Residues K165 and K176 each carry the N6-acetyllysine; by CLOCK modification. Positions 180 and 189 each coordinate L-citrulline. Position 180 is a phosphoserine (S180). S219 carries the post-translational modification Phosphoserine. L-citrulline is bound by residues E270 and Y282.

The protein belongs to the argininosuccinate synthase family. Type 1 subfamily. Homotetramer. Interacts with NMRAL1. Interacts with CLOCK; in a circadian manner. Forms tissue-specific complexes with ASL, SLC7A1, HSP90AA1 and nitric oxide synthase NOS1, NOS2 or NOS3; the complex regulates cell-autonomous L-arginine synthesis and citrulline recycling while channeling extracellular L-arginine to nitric oxide synthesis pathway. Acetylated by CLOCK in a circadian manner which negatively regulates its enzyme activity. Deacetylated by histone deacetylases.

Its subcellular location is the cytoplasm. The protein resides in the cytosol. It carries out the reaction L-citrulline + L-aspartate + ATP = 2-(N(omega)-L-arginino)succinate + AMP + diphosphate + H(+). The protein operates within amino-acid biosynthesis; L-arginine biosynthesis; L-arginine from L-ornithine and carbamoyl phosphate: step 2/3. It participates in nitrogen metabolism; urea cycle; (N(omega)-L-arginino)succinate from L-aspartate and L-citrulline: step 1/1. One of the enzymes of the urea cycle, the metabolic pathway transforming neurotoxic amonia produced by protein catabolism into inocuous urea in the liver of ureotelic animals. Catalyzes the formation of arginosuccinate from aspartate, citrulline and ATP and together with ASL it is responsible for the biosynthesis of arginine in most body tissues. This is Argininosuccinate synthase from Bos taurus (Bovine).